Consider the following 500-residue polypeptide: Probable cytosol aminopeptidase (500 aa).

The Mn(2+) site is built by Lys264 and Asp269. Lys276 is an active-site residue. Asp287, Asp346, and Glu348 together coordinate Mn(2+). Arg350 is a catalytic residue.

It belongs to the peptidase M17 family. The cofactor is Mn(2+).

It localises to the cytoplasm. The enzyme catalyses Release of an N-terminal amino acid, Xaa-|-Yaa-, in which Xaa is preferably Leu, but may be other amino acids including Pro although not Arg or Lys, and Yaa may be Pro. Amino acid amides and methyl esters are also readily hydrolyzed, but rates on arylamides are exceedingly low.. It catalyses the reaction Release of an N-terminal amino acid, preferentially leucine, but not glutamic or aspartic acids.. Presumably involved in the processing and regular turnover of intracellular proteins. Catalyzes the removal of unsubstituted N-terminal amino acids from various peptides. In Nitrobacter hamburgensis (strain DSM 10229 / NCIMB 13809 / X14), this protein is Probable cytosol aminopeptidase.